The following is a 625-amino-acid chain: MPSWALFMVTSCLLLALPNQAQVTSQDVFLLALGTEPLNCFSQTFEDLTCFWDEEEAAPSGTYQLLYAYRGEKPRACPLYSQSVPTFGTRYVCQFPAQDEVRLFFPLHLWVKNVSLNQTLIQRVLFVDSVGLPAPPRVIKARGGSQPGELQIHWEAPAPEISDFLRHELRYGPTDSSNATAPSVIQLLSTETCCPTLWMPNPVPVLDQPPCVHPTASQPHGPAPFLTVKGGSCLVSGLQAGKSYWLQLRSQPDGVSLRGSWGPWSFPVTVDLPGDAVTIGLQCFTLDLKMVTCQWQQQDRTSSQGFFRHSRTRCCPTDRDPTWEKCEEEEPRPGSQPALVSRCHFKSRNDSVIHILVEVTTAQGAVHSYLGSPFWIHQAVLLPTPSLHWREVSSGRLELEWQHQSSWAAQETCYQLRYTGEGREDWKVLEPSLGARGGTLELRPRARYSLQLRARLNGPTYQGPWSAWSPPARVSTGSETAWITLVTALLLVLSLSALLGLLLLKWQFPAHYRRLRHALWPSLPDLHRVLGQYLRDTAALSPSKATVTDSCEEVEPSLLEILPKSSESTPLPLCPSQPQMDYRGLQPCLRTMPLSVCPPMAETGSCCTTHIANHSYLPLSYWQQP.

Residues 1–25 (MPSWALFMVTSCLLLALPNQAQVTS) form the signal peptide. Topologically, residues 26–482 (QDVFLLALGT…RVSTGSETAW (457 aa)) are extracellular. N-linked (GlcNAc...) asparagine glycosylation is present at Asn117. Fibronectin type-III domains are found at residues 178–270 (NATA…PVTV) and 383–479 (PTPS…TGSE). A WSXWS motif motif is present at residues 465 to 469 (WSAWS). Residues 483 to 504 (ITLVTALLLVLSLSALLGLLLL) traverse the membrane as a helical segment. Residues 505–625 (KWQFPAHYRR…YLPLSYWQQP (121 aa)) lie on the Cytoplasmic side of the membrane. The Box 1 motif motif lies at 519–527 (LWPSLPDLH). Residues Lys544 and Lys564 each participate in a glycyl lysine isopeptide (Lys-Gly) (interchain with G-Cter in ubiquitin) cross-link. Phosphotyrosine occurs at positions 616 and 621.

It belongs to the type I cytokine receptor family. Type 1 subfamily. Homodimer. Interacts with ATXN2L. Interacts with JAK2 and TYK2; these interactions increase MPL localization to the cell membrane. Interacts with THPO. Interacts with SHIP/INPP5D. Interacts with kinases BTK and SYK. In terms of processing, ubiquitination at Lys-544 and Lys-564 targets MPL for degradation by both the lysosomal and proteasomal pathways. The E3 ubiquitin-protein ligase CBL significantly contributes to this ubiquitination.

Its subcellular location is the cell membrane. It localises to the golgi apparatus. It is found in the cell surface. In terms of biological role, receptor for thrombopoietin that regulates hematopoietic stem cell renewal, megakaryocyte differentiation, and platelet formation. Upon activation by THPO, induces rapid tyrosine phosphorylation and activation of JAK2, providing docking sites for many signaling proteins such as STAT5, SHIP/INPP5D, GRB2, SOS1 and PI3K. In turn, These signaling cascades lead to the proliferation, survival, and differentiation of megakaryocytes, ultimately leading to increased platelet production. Functionally, acts as an inhibitor of thrombopoietin signaling by promoting protein down-regulation of full-length isoform Mpl-fl. This is Thrombopoietin receptor (Mpl) from Mus musculus (Mouse).